The primary structure comprises 352 residues: MNLLQEALAKIQPVDAVMLAKAQAKLDKKTKPLGSLGRLEEFARRFVAITGDLQPDTAKKIVFTFAGDHGVVEEGVSAFPKEVTPQMVFNFLRGGAGVNVLARHTGAEVRVVDVGVDFDFEPTPGLIIDKVAKGTRNFAKGPAMSREEAIAAIEVGIGLANRAKAEGVAMLGTGEMGIGNTTPSSAIIAAISGKTVKEVTHRGTGINDAALSHKIRVIEQGLAVNKPDPRDPLDVLAKVGGLEIAAIAGLVLGAAANRQPVVIDGFISTAGALIASELNPHVKEYIFAAHESVEIGHRFMLDRIGAEPILDLKLRLGEGTGAALAMGLIEAGVKILKEMATFEEAGVAEGEY.

Catalysis depends on E318, which acts as the Proton acceptor.

Belongs to the CobT family.

It carries out the reaction 5,6-dimethylbenzimidazole + nicotinate beta-D-ribonucleotide = alpha-ribazole 5'-phosphate + nicotinate + H(+). The protein operates within nucleoside biosynthesis; alpha-ribazole biosynthesis; alpha-ribazole from 5,6-dimethylbenzimidazole: step 1/2. Catalyzes the synthesis of alpha-ribazole-5'-phosphate from nicotinate mononucleotide (NAMN) and 5,6-dimethylbenzimidazole (DMB). This chain is Nicotinate-nucleotide--dimethylbenzimidazole phosphoribosyltransferase, found in Geotalea uraniireducens (strain Rf4) (Geobacter uraniireducens).